Here is a 333-residue protein sequence, read N- to C-terminus: L-lactate dehydrogenase B chain (333 aa).

NAD(+) is bound by residues 29 to 57 (GQVG…LEDK) and arginine 99. Substrate is bound by residues arginine 106, asparagine 138, and arginine 169. Asparagine 138 is a binding site for NAD(+). Histidine 193 acts as the Proton acceptor in catalysis. Residue threonine 248 participates in substrate binding.

It belongs to the LDH/MDH superfamily. LDH family. In terms of assembly, homotetramer.

The protein resides in the cytoplasm. It carries out the reaction (S)-lactate + NAD(+) = pyruvate + NADH + H(+). It functions in the pathway fermentation; pyruvate fermentation to lactate; (S)-lactate from pyruvate: step 1/1. Interconverts simultaneously and stereospecifically pyruvate and lactate with concomitant interconversion of NADH and NAD(+). This is L-lactate dehydrogenase B chain (LDHB) from Caiman crocodilus apaporiensis (Rio Apaporis caiman).